A 123-amino-acid chain; its full sequence is Small ribosomal subunit protein uS13 (123 aa).

Residues 94-123 form a disordered region; the sequence is AGLPVRGQRTKTNARTRKGPKKTVGVQRKK. Over residues 101-123 the composition is skewed to basic residues; sequence QRTKTNARTRKGPKKTVGVQRKK.

Belongs to the universal ribosomal protein uS13 family. As to quaternary structure, part of the 30S ribosomal subunit. Forms a loose heterodimer with protein S19. Forms two bridges to the 50S subunit in the 70S ribosome.

Its function is as follows. Located at the top of the head of the 30S subunit, it contacts several helices of the 16S rRNA. In the 70S ribosome it contacts the 23S rRNA (bridge B1a) and protein L5 of the 50S subunit (bridge B1b), connecting the 2 subunits; these bridges are implicated in subunit movement. Contacts the tRNAs in the A and P-sites. This Acetivibrio thermocellus (strain ATCC 27405 / DSM 1237 / JCM 9322 / NBRC 103400 / NCIMB 10682 / NRRL B-4536 / VPI 7372) (Clostridium thermocellum) protein is Small ribosomal subunit protein uS13.